Consider the following 37-residue polypeptide: Large ribosomal subunit protein bL36 (37 aa).

Belongs to the bacterial ribosomal protein bL36 family.

This Polaromonas naphthalenivorans (strain CJ2) protein is Large ribosomal subunit protein bL36.